Reading from the N-terminus, the 355-residue chain is Elongation factor Ts, mitochondrial (355 aa).

A mitochondrion-targeting transit peptide spans 1–46 (MIRSLNFALRNCNKNILINSNKITINNGLLLKKNNFCTQSTSEVKV).

Belongs to the EF-Ts family.

Its subcellular location is the mitochondrion. In terms of biological role, associates with the EF-Tu.GDP complex and induces the exchange of GDP to GTP. It remains bound to the aminoacyl-tRNA.EF-Tu.GTP complex up to the GTP hydrolysis stage on the ribosome. This Dictyostelium discoideum (Social amoeba) protein is Elongation factor Ts, mitochondrial (tsfm).